Consider the following 219-residue polypeptide: Steroid receptor RNA activator 1 (219 aa).

Disordered stretches follow at residues 1–90 (MAEL…SSPV) and 192–219 (SLSSEENKEEKSTVAPENQTIPGFQPSS). Residues 23 to 32 (YGLQTQTGGT) show a composition bias toward polar residues. Residue Ser48 is modified to Phosphoserine. Residues 55–76 (SGPPPVDHPPPSSKASRPPPMG) are compositionally biased toward pro residues. Basic and acidic residues predominate over residues 192–203 (SLSSEENKEEKS). Residues 206–219 (APENQTIPGFQPSS) are compositionally biased toward polar residues.

Belongs to the SRA1 family. In terms of assembly, SRA1 RNA exists in a ribonucleoprotein complex containing NCOA1. The RNA also forms a complex with PUS1 and RARG in the nucleus. Interacts with AR. In terms of tissue distribution, expressed in various prostate cancer cell lines.

The protein resides in the nucleus. It localises to the cytoplasm. Its function is as follows. Functional RNA which acts as a transcriptional coactivator that selectively enhances steroid receptor-mediated transactivation ligand-independently through a mechanism involving the modulating N-terminal domain (AF-1) of steroid receptors. Also mediates transcriptional coactivation of steroid receptors ligand-dependently through the steroid-binding domain (AF-2). Enhances cellular proliferation and differentiation and promotes apoptosis in vivo. May play a role in tumorigenesis. This Rattus norvegicus (Rat) protein is Steroid receptor RNA activator 1.